The chain runs to 868 residues: Protein NIP100 (868 aa).

In terms of domain architecture, CAP-Gly spans 34 to 84; the sequence is GETQFAKGIWYGIELDKPLGKNDGSANGIRYFDIDLKKANSNGGYYGLFCK. Coiled-coil stretches lie at residues 101–175, 207–375, and 645–776; these read LNGN…HLDN, LDQT…QEEL, and SLLS…QIKE.

As to quaternary structure, component of the dynactin complex composed of at least ARP1, JNM1, NIP100 and ARP10. Dynactin comprises a short rod of the ARP1 filament attached to ARP10 at its pointed-end and probably associated with the capping protein at its barbed-end. The rod is implicated in dynein cargo binding. A sidearm formed by NIP100 projects from the ARP1 filament and is implicated in motor binding.

The protein localises to the cytoplasm. It is found in the cytoskeleton. The protein resides in the spindle pole. Functionally, motor-binding component of the dynactin complex which assists cytoplasmic dynein by increasing its processivity and by regulation of its cargo binding. The dynactin complex is required for the spindle translocation late in anaphase and is involved in a cell wall synthesis checkpoint. The polypeptide is Protein NIP100 (NIP100) (Saccharomyces cerevisiae (strain ATCC 204508 / S288c) (Baker's yeast)).